The primary structure comprises 363 residues: Homeobox protein DTH-2 (363 aa).

Positions 133–192 form a DNA-binding region, homeobox; it reads RRKRRILFSQAQIYELERRFKQQKYLSAPEREHLANLINLTPTQVKIWFQNHRYKCKRSQ. The tract at residues 189–246 is disordered; it reads KRSQKDKEKEQQKEKSYHLKKNIVDDKERSPNKQICNASSSDRSTPEEPVAKAKESGL. Residues 191–219 show a composition bias toward basic and acidic residues; the sequence is SQKDKEKEQQKEKSYHLKKNIVDDKERSP. Residues 220–231 show a composition bias toward polar residues; it reads NKQICNASSSDR. Residues 232–246 show a composition bias toward basic and acidic residues; the sequence is STPEEPVAKAKESGL.

Belongs to the NK-2 homeobox family. In terms of tissue distribution, intestine and unidentified peripheral parenchymal cells. Slightly higher levels in the cephalic region compared to other body regions.

It localises to the nucleus. Functionally, this protein might be involved in determination and/or differentiation of nerve cells in the continuous replacement of neurons in the cephalic region. The protein is Homeobox protein DTH-2 (DTH-2) of Girardia tigrina (Planarian).